Consider the following 424-residue polypeptide: MAVFKKKKTSLTSLFLGCYKAKNASKYEGGEKAVMKIRTCPAFKRLSLSDISDPSSPMSVMDDLSHSFTSQKLRLFTLSELRVITHNFSRSNMLGEGGFGPVYKGFIDDKVKPGIEAQPVAVKALDLHGHQGHREWLAEILFLGQLSNKHLVKLIGFCCEEEQRVLVYEYMPRGSLENQLFRRNSLAMAWGIRMKIALGAAKGLAFLHEAEKPVIYRDFKTSNILLDSDYNAKLSDFGLAKDGPEGEHTHVTTRVMGTQGYAAPEYIMTGHLTTMNDVYSFGVVLLELITGKRSMDNTRTRREQSLVEWARPMLRDQRKLERIIDPRLANQHKTEAAQVAASLAYKCLSQHPKYRPTMCEVVKVLESIQEVDIRKHDGNNNKEGKKFVDINKFRHHRKGKRRVNIAYSDSLVYKESKAKQNDGI.

The Protein kinase domain occupies 88 to 368 (FSRSNMLGEG…CEVVKVLESI (281 aa)). ATP is bound by residues 94-102 (LGEGGFGPV) and Lys-123. The Proton acceptor role is filled by Asp-218.

The protein belongs to the protein kinase superfamily. Ser/Thr protein kinase family. In terms of tissue distribution, expressed specifically in roots.

The protein resides in the cell membrane. The enzyme catalyses L-seryl-[protein] + ATP = O-phospho-L-seryl-[protein] + ADP + H(+). It carries out the reaction L-threonyl-[protein] + ATP = O-phospho-L-threonyl-[protein] + ADP + H(+). May play a role in the signal transduction pathway of osmotic stress. May be involved in plant defense signaling. This chain is Probable serine/threonine-protein kinase PBL12, found in Arabidopsis thaliana (Mouse-ear cress).